We begin with the raw amino-acid sequence, 395 residues long: Multidrug resistance protein MdtL (395 aa).

Over 1 to 3 (MKR) the chain is Cytoplasmic. The chain crosses the membrane as a helical span at residues 4-24 (FLLCSFALVLLYPAGIDMYLV). Residues 25 to 41 (GLPRIAADLNASEAQLH) are Periplasmic-facing. Residues 42–62 (IAFSVYLAGMATAMLFAGKIA) traverse the membrane as a helical segment. Over 63–68 (DQSGRK) the chain is Cytoplasmic. Residues 69–89 (PVAIVGALVFMMASLLCSRAS) traverse the membrane as a helical segment. Topologically, residues 90-92 (EGS) are periplasmic. A helical membrane pass occupies residues 93–113 (LFLSGRFLQGVGAGGCYVVAF). Residues 114–130 (AILRDTLDEHRRAKVLS) are Cytoplasmic-facing. Residues 131 to 151 (LLNGITCIVPVLAPVVGHLIM) form a helical membrane-spanning segment. Topologically, residues 152–157 (LRFPWQ) are periplasmic. Residues 158-178 (SLFYTMSAMGIIVGLLSLFIL) traverse the membrane as a helical segment. Over 179–216 (RETRPVRLAPRDLSRSSPAAESLINRFFVSRLAITTLS) the chain is Cytoplasmic. Residues 217 to 237 (VSVILTFVNASPVLLMEVMGF) traverse the membrane as a helical segment. At 238–246 (SRGDYAITM) the chain is on the periplasmic side. A helical membrane pass occupies residues 247–267 (ALTAGVSMVVSFSTPFALGLF). Over 268 to 270 (KPR) the chain is Cytoplasmic. A helical transmembrane segment spans residues 271–291 (TLMLVSQGLFLTAGVTLSLAH). Residues 292-294 (TNT) lie on the Periplasmic side of the membrane. The helical transmembrane segment at 295-315 (VTLFGLTLICAGFSVGFGVAM) threads the bilayer. Topologically, residues 316-327 (SQALGPFSLRAG) are cytoplasmic. The chain crosses the membrane as a helical span at residues 328-350 (VASSTLGIAQVCGSSLWIWLAAI). The Periplasmic segment spans residues 351-354 (LGIS). Residues 355-377 (AMNMLIGILIGCSIVSILLIFSV) form a helical membrane-spanning segment. Residues 378–395 (TPNRSVAEHEEIPYQSRP) are Cytoplasmic-facing.

It belongs to the major facilitator superfamily. DHA1 family. MdtL (TC 2.A.1.2.22) subfamily.

The protein localises to the cell inner membrane. This Salmonella typhimurium (strain LT2 / SGSC1412 / ATCC 700720) protein is Multidrug resistance protein MdtL (mdtL).